Reading from the N-terminus, the 111-residue chain is MFGKAGLGGLMKQAQQMQENMKKAQAKLAETEIEGEAGNGLVKITMTCAHEVRKIDISPDLIQEAADDKEMLEDLILAALKSARGKAEETANKTMGAFTQDLPPGVGDFFR.

The protein belongs to the YbaB/EbfC family. As to quaternary structure, homodimer.

The protein resides in the cytoplasm. The protein localises to the nucleoid. Functionally, binds to DNA and alters its conformation. May be involved in regulation of gene expression, nucleoid organization and DNA protection. The polypeptide is Nucleoid-associated protein NGK_1136 (Neisseria gonorrhoeae (strain NCCP11945)).